The primary structure comprises 585 residues: Nucleoporin p58/p45 (585 aa).

Repeat copies occupy residues 7–8 (FG), 30–31 (FG), 42–43 (FG), 61–62 (FG), and 66–67 (FG). Positions 7–565 (FGSGTLGSTT…VSNPASAGFG (559 aa)) are 14 X 2 AA repeats of F-G. The disordered stretch occupies residues 194–232 (TSAASSEGLGGIDFSTSSDKKSDKTGTRPEDSKALKDEN). Over residues 211–232 (SDKKSDKTGTRPEDSKALKDEN) the composition is skewed to basic and acidic residues. Coiled coils occupy residues 242 to 262 (ENLQ…SRMS) and 300 to 367 (ETAQ…SHIT). Position 317 is a phosphothreonine (Thr-317). Repeat copies occupy residues 474–475 (FG), 478–479 (FG), 499–500 (FG), 505–506 (FG), 515–516 (FG), 517–518 (FG), 531–532 (FG), 554–555 (FG), and 564–565 (FG). A disordered region spans residues 563 to 585 (GFGTGGQLLQLKRPPAGNKRGKR).

It belongs to the NUP58 family. As to quaternary structure, component of the p62 complex, a complex composed of NUP62, NUP54, and isoform p58 and isoform p45 of NUP58. Isoform p58 interacts with NUTF2. Isoform p58 interacts with SRP1-alpha and Importin p97 proteins when they are together, but not with SRP1-alpha protein alone. O-glycosylated. Expressed in liver.

It is found in the nucleus. The protein localises to the nuclear pore complex. Its subcellular location is the nucleus membrane. Its function is as follows. Component of the nuclear pore complex, a complex required for the trafficking across the nuclear membrane. The chain is Nucleoporin p58/p45 from Rattus norvegicus (Rat).